The chain runs to 410 residues: Argininosuccinate synthase (410 aa).

10 to 18 (AYSGGLDTS) contacts ATP. Residues Tyr88 and Ser93 each coordinate L-citrulline. Position 118 (Gly118) interacts with ATP. Positions 120, 124, and 125 each coordinate L-aspartate. Asn124 is an L-citrulline binding site. L-citrulline-binding residues include Arg128, Ser177, Ser186, Glu262, and Tyr274.

This sequence belongs to the argininosuccinate synthase family. Type 1 subfamily. In terms of assembly, homotetramer.

The protein resides in the cytoplasm. It carries out the reaction L-citrulline + L-aspartate + ATP = 2-(N(omega)-L-arginino)succinate + AMP + diphosphate + H(+). It functions in the pathway amino-acid biosynthesis; L-arginine biosynthesis; L-arginine from L-ornithine and carbamoyl phosphate: step 2/3. In Thermoanaerobacter sp. (strain X514), this protein is Argininosuccinate synthase.